The primary structure comprises 203 residues: 22.3 kDa class VI heat shock protein (203 aa).

The sHSP domain maps to 86-203 (ALRRGARTTV…DAHQAAAATA (118 aa)).

Belongs to the small heat shock protein (HSP20) family. May form oligomeric structures.

Its subcellular location is the cytoplasm. The protein is 22.3 kDa class VI heat shock protein (HSP22.3) of Oryza sativa subsp. japonica (Rice).